Here is a 141-residue protein sequence, read N- to C-terminus: Large ribosomal subunit protein uL11 (141 aa).

The protein belongs to the universal ribosomal protein uL11 family. As to quaternary structure, part of the ribosomal stalk of the 50S ribosomal subunit. Interacts with L10 and the large rRNA to form the base of the stalk. L10 forms an elongated spine to which L12 dimers bind in a sequential fashion forming a multimeric L10(L12)X complex. Post-translationally, one or more lysine residues are methylated.

Forms part of the ribosomal stalk which helps the ribosome interact with GTP-bound translation factors. The sequence is that of Large ribosomal subunit protein uL11 from Moorella thermoacetica (strain ATCC 39073 / JCM 9320).